Here is a 912-residue protein sequence, read N- to C-terminus: WD repeat-containing protein 44 (912 aa).

3 disordered regions span residues 206 to 352, 399 to 426, and 460 to 481; these read DIIE…ELTD, SNDA…LKQK, and RDEV…GMPY. A compositionally biased stretch (pro residues) spans 236–258; it reads NRPPQPINAPPPRPPPPARPAPP. Residues 264-278 show a composition bias toward basic and acidic residues; it reads GDTDFDRSSGFEYQK. The segment covering 288–311 has biased composition (polar residues); sequence SPNTLTENMNRDSQPSLDLASATS. Residues 410–422 show a composition bias toward basic and acidic residues; the sequence is KPQSHQSETDGGK. The span at 469–478 shows a compositional bias: acidic residues; the sequence is DDPSSSDDEG. The stretch at 511–550 is one WD 1 repeat; the sequence is EHVGAVWTMKFSHCGRLLASAGQDNVVRIWVLKNAFDYFN. The segment at 559-594 is disordered; it reads EGRVSPSPSQESLNSSKSDTDGGVFSGTDDVDPDDK. Positions 563-575 are enriched in low complexity; that stretch reads SPSPSQESLNSSK. 7 WD repeats span residues 608–646, 648–688, 693–732, 743–782, 787–826, 841–880, and 882–912; these read GHTA…CLCC, QHID…VALW, GQTK…YHTQ, RVGR…LSMK, VNSS…SKFT, AHNA…ENIP, and GALK…KNIS. The disordered stretch occupies residues 861 to 882; that stretch reads AETSSEKQEGDQAEPVENIPSG.

The protein resides in the cytoplasm. The protein localises to the cytosol. It is found in the perinuclear region. It localises to the endosome membrane. Its subcellular location is the golgi apparatus. The protein resides in the trans-Golgi network. In terms of biological role, downstream effector for rab11. May be involved in vesicle recycling. May also be involved in the inhibition of the intracellular ciliogenesis pathway. This chain is WD repeat-containing protein 44 (wdr44), found in Xenopus laevis (African clawed frog).